Reading from the N-terminus, the 543-residue chain is Transmembrane protease serine 13 (543 aa).

Disordered stretches follow at residues 1–96 (MDRG…TRVY) and 109–129 (RASPARSAPATRATRESPGLS). Topologically, residues 1–143 (MDRGSHRNSS…SWQETQRQLP (143 aa)) are cytoplasmic. Tandem repeats lie at residues 14 to 17 (TPPQ) and 18 to 22 (ASPAR). The tract at residues 14–49 (TPPQASPARTSPARAPPQASPARTPPQASPARTPPQ) is 4 X 4 AA repeats of T-P-P-Q. The tract at residues 18-69 (ASPARTSPARAPPQASPARTPPQASPARTPPQASPARAPPPQASPARASPAR) is 8 X 5 AA repeats of A-S-P-A-R. The 2-2; approximate repeat unit spans residues 23–27 (TSPAR). The segment covering 27–60 (RAPPQASPARTPPQASPARTPPQASPARAPPPQA) has biased composition (pro residues). One copy of the 1-2; approximate repeat lies at 28–31 (APPQ). Repeat copies occupy residues 32–36 (ASPAR), 37–40 (TPPQ), 41–45 (ASPAR), 46–49 (TPPQ), and 50–54 (ASPAR). A 2-6; approximate repeat occupies 55 to 59 (APPPQ). Repeat copies occupy residues 60–64 (ASPAR) and 65–69 (ASPAR). Composition is skewed to low complexity over residues 61 to 94 (SPARASPARAPPSRSSSGRSSSARSASTTSSPTR) and 109 to 120 (RASPARSAPATR). Residues 144–164 (LIGCVILLISLVISLILLFYF) traverse the membrane as a helical; Signal-anchor for type II membrane protein segment. Residues 165–543 (WRGHTGIKYK…MESEVRFRKS (379 aa)) lie on the Extracellular side of the membrane. One can recognise an LDL-receptor class A domain in the interval 180–202 (CPIHAVRCDGVVDCKMKSDELGC). Residues 199–301 (ELGCVRFDWD…HCGLRAMTGR (103 aa)) form the SRCR domain. Disulfide bonds link cysteine 226/cysteine 290, cysteine 239/cysteine 293, and cysteine 327/cysteine 343. 2 N-linked (GlcNAc...) asparagine glycosylation sites follow: asparagine 231 and asparagine 268. The Peptidase S1 domain maps to 302 to 535 (IVGGALTSES…VLPWIYRKME (234 aa)). Histidine 342 serves as the catalytic Charge relay system. Asparagine 381 is a glycosylation site (N-linked (GlcNAc...) asparagine). The active-site Charge relay system is aspartate 390. Asparagine 421 carries N-linked (GlcNAc...) asparagine glycosylation. Cystine bridges form between cysteine 424–cysteine 493, cysteine 456–cysteine 472, and cysteine 483–cysteine 511. Serine 487 serves as the catalytic Charge relay system.

It belongs to the peptidase S1 family. In terms of assembly, interacts with SPINT1/HAI-1; the interaction promotes the phosphorylation and cell membrane localization of TMPRSS13. Interacts with SPINT2/HAI-2; the interaction promotes the phosphorylation and cell membrane localization of TMPRSS13. The inactive zymogen is post-translationally modified and then trafficked to the cell surface, whereby it undergoes autocatalytic cleavage resulting in an activated form that is released extracellularly. In terms of processing, phosphorylation is required for localization at the cell surface. Phosphorylation increases following inhibition of protease activity by SPINT2/HAI-2. In terms of tissue distribution, expressed in the suprabasal squamous epithelium of the epidermis, hair follicles, oral epithelium, cornea, upper digestive tract, transitional epithelium of the bladder, prostate, heart, intestine, kidney and thymus.

It is found in the cell membrane. The protein localises to the secreted. It localises to the cytoplasm. With respect to regulation, cleavage of HGF is inhibited by SPINT1/HAI-1 via the BPTI/Kunitz inhibitor 1 domain. In terms of biological role, serine protease. Cleaves the proform of PRSS8/prostasin to form the active protein. Cleaves the proform of HGF to form the active protein which promotes MAPK signaling. Promotes the formation of the stratum corneum and subsequently the epidermal barrier in embryos. The sequence is that of Transmembrane protease serine 13 (Tmprss13) from Mus musculus (Mouse).